Reading from the N-terminus, the 114-residue chain is Hydrogenase maturation factor HypA (114 aa).

His-2 serves as a coordination point for Ni(2+). Zn(2+) contacts are provided by Cys-74, Cys-77, Cys-90, and Cys-93.

The protein belongs to the HypA/HybF family.

In terms of biological role, involved in the maturation of [NiFe] hydrogenases. Required for nickel insertion into the metal center of the hydrogenase. This is Hydrogenase maturation factor HypA from Campylobacter jejuni subsp. jejuni serotype O:2 (strain ATCC 700819 / NCTC 11168).